Consider the following 60-residue polypeptide: MACPKKKTSNAKRDQRRAHWRKQAAREAQKALSLGKSVLSGRSNSFVYPTKEEEEGEDEE.

Positions 1–23 (MACPKKKTSNAKRDQRRAHWRKQ) are enriched in basic residues. Residues 1-60 (MACPKKKTSNAKRDQRRAHWRKQAAREAQKALSLGKSVLSGRSNSFVYPTKEEEEGEDEE) form a disordered region.

Belongs to the bacterial ribosomal protein bL32 family.

The protein is Large ribosomal subunit protein bL32 of Microcystis aeruginosa (strain NIES-843 / IAM M-2473).